The primary structure comprises 287 residues: Large ribosomal subunit protein uL2 (287 aa).

The segment at 214-287 (LGRRPEVRGS…SKRGRGGRDA (74 aa)) is disordered. Over residues 271–287 (QRRRRKSSKRGRGGRDA) the composition is skewed to basic residues.

Belongs to the universal ribosomal protein uL2 family. Part of the 50S ribosomal subunit. Forms a bridge to the 30S subunit in the 70S ribosome.

Functionally, one of the primary rRNA binding proteins. Required for association of the 30S and 50S subunits to form the 70S ribosome, for tRNA binding and peptide bond formation. It has been suggested to have peptidyltransferase activity; this is somewhat controversial. Makes several contacts with the 16S rRNA in the 70S ribosome. This Synechococcus elongatus (strain ATCC 33912 / PCC 7942 / FACHB-805) (Anacystis nidulans R2) protein is Large ribosomal subunit protein uL2.